The sequence spans 248 residues: 2-C-methyl-D-erythritol 4-phosphate cytidylyltransferase (248 aa).

This sequence belongs to the IspD/TarI cytidylyltransferase family. IspD subfamily.

The catalysed reaction is 2-C-methyl-D-erythritol 4-phosphate + CTP + H(+) = 4-CDP-2-C-methyl-D-erythritol + diphosphate. The protein operates within isoprenoid biosynthesis; isopentenyl diphosphate biosynthesis via DXP pathway; isopentenyl diphosphate from 1-deoxy-D-xylulose 5-phosphate: step 2/6. Its function is as follows. Catalyzes the formation of 4-diphosphocytidyl-2-C-methyl-D-erythritol from CTP and 2-C-methyl-D-erythritol 4-phosphate (MEP). This chain is 2-C-methyl-D-erythritol 4-phosphate cytidylyltransferase, found in Corynebacterium efficiens (strain DSM 44549 / YS-314 / AJ 12310 / JCM 11189 / NBRC 100395).